We begin with the raw amino-acid sequence, 426 residues long: Tachykinins (426 aa).

The propeptide occupies 1 to 116; the sequence is MQCDFRVHQD…IEDNLSHEFE (116 aa). Position 127 is an arginine amide (R127). The propeptide occupies 131–145; sequence GYLTPDFEDSYFRDE. Residue R156 is modified to Arginine amide. Positions 160–167 are excised as a propeptide; it reads VVSDDDYY. R178 bears the Arginine amide mark. Positions 182–235 are excised as a propeptide; that stretch reads SLEEVLGEIEKKAAMDYYDTRDKKTYVFEYPEDYEKRLLASIRGKLKEFPMEWE. At R246 the chain carries Arginine amide. The propeptide occupies 250-259; sequence SLLDEIEELE. At R270 the chain carries Arginine amide. Positions 274–291 are excised as a propeptide; sequence NALENYIDYYLDPDMDFD. A disordered region spans residues 299 to 329; the sequence is QGMRGKKDSDKRAPMGFQGMRGKRNTGQRFD. The residue at position 302 (R302) is an Arginine amide. Positions 306–308 are excised as a propeptide; that stretch reads DSD. R319 carries the post-translational modification Arginine amide. Positions 323–358 are excised as a propeptide; it reads NTGQRFDTGINFNIRSSNEYQGTNNRRNALASCQLE. 2 positions are modified to arginine amide: R369 and R386. Positions 390-426 are excised as a propeptide; the sequence is WATAPYEDDSPFISVFDNTERIGVDGDSPAILGNSIS.

The protein belongs to the tachykinin family. As to expression, tachykinins (TK) are expressed throughout the nervous system. APMGFQGMR-amide is also expressed in the retrocerebral complex (at protein level).

It is found in the secreted. Its function is as follows. Tachykinins are active peptides which excite neurons, evoke behavioral responses, are potent vasodilators and secretagogues, and contract (directly or indirectly) many smooth muscles. The protein is Tachykinins of Camponotus floridanus (Florida carpenter ant).